The primary structure comprises 209 residues: DNA ADP-ribosyl transferase (209 aa).

The DarT domain maps to 9-209 (TPIYHITHID…RVCIRKDWYY (201 aa)). NAD(+) is bound by residues 13–15 (HIT), Gly-22, and Leu-30. Positions 35 to 53 (SPPKQRSIAYAHIQERRNR) are NAD(+)-binding element. Residues 44 to 50 (YAHIQER) mediate DNA binding. Residue Arg-51 participates in NAD(+) binding. Residue Arg-51 is the Proton acceptor of the active site. 3 consecutive DNA-binding regions follow at residues 75-80 (RSPMLY), 145-148 (SYWA), and 154-158 (REKKQ). An ADP-ribosylating turn-turn loop region spans residues 116–160 (TDRHGVLSHARFFRQLEELAQLDWEAIQASYWADPPELREKKQAE). The active site involves Glu-160.

Belongs to the DarT ADP-ribosyltransferase family. In terms of assembly, interacts with cognate antitoxin DarG (via C-terminus); this heterodimeric complex neutralizes the toxic effect of DarT by preventing ssDNA binding to DarT and consequently inactivating the toxin by direct protein-protein interactions.

It carries out the reaction a thymidine in DNA + NAD(+) = an N-(ADP-alpha-D-ribosyl)-thymidine in DNA + nicotinamide + H(+). Functionally, toxic component of the hybrid type II/IV toxin-antitoxin (TA) system DarTG, which plays a crucial role in controlling bacterial growth and bacteriophage infection. In case of phage infection, DarT toxin ADP-ribosylates DNA, which inhibits both viral DNA and RNA synthesis and leads to abortive infection. ADP-ribosylates ssDNA on the second thymidine of the consensus sequence 5'-TNTC-3'; the protein does not auto-modify. Arg-51 is highly flexible, allowing it to assume multiple positions in the crystal structures. Its toxic effect is neutralized by cognate antitoxin DarG. In Thermus sp. (strain 2.9), this protein is DNA ADP-ribosyl transferase.